Reading from the N-terminus, the 334-residue chain is Beta-hexosaminidase (334 aa).

Residues D62, R70, R131, and 161–162 (KH) each bind substrate. Residue H174 is the Proton donor/acceptor of the active site. D246 serves as the catalytic Nucleophile.

This sequence belongs to the glycosyl hydrolase 3 family. NagZ subfamily.

The protein localises to the cytoplasm. It carries out the reaction Hydrolysis of terminal non-reducing N-acetyl-D-hexosamine residues in N-acetyl-beta-D-hexosaminides.. The protein operates within cell wall biogenesis; peptidoglycan recycling. Plays a role in peptidoglycan recycling by cleaving the terminal beta-1,4-linked N-acetylglucosamine (GlcNAc) from peptide-linked peptidoglycan fragments, giving rise to free GlcNAc, anhydro-N-acetylmuramic acid and anhydro-N-acetylmuramic acid-linked peptides. The polypeptide is Beta-hexosaminidase (Tolumonas auensis (strain DSM 9187 / NBRC 110442 / TA 4)).